The sequence spans 433 residues: Probable D-serine dehydratase (433 aa).

Lys110 bears the N6-(pyridoxal phosphate)lysine mark.

It belongs to the serine/threonine dehydratase family. DsdA subfamily. Pyridoxal 5'-phosphate serves as cofactor.

The catalysed reaction is D-serine = pyruvate + NH4(+). The polypeptide is Probable D-serine dehydratase (Oenococcus oeni (strain ATCC BAA-331 / PSU-1)).